Consider the following 122-residue polypeptide: Large ribosomal subunit protein uL14c (122 aa).

The protein belongs to the universal ribosomal protein uL14 family. Part of the 50S ribosomal subunit.

Its subcellular location is the plastid. It is found in the chloroplast. Binds to 23S rRNA. In Pyropia yezoensis (Susabi-nori), this protein is Large ribosomal subunit protein uL14c.